Here is a 352-residue protein sequence, read N- to C-terminus: Protein Wnt-3a (352 aa).

Positions 1-18 (MAPLGYLLVLCSLKQALG) are cleaved as a signal peptide. 11 disulfides stabilise this stretch: Cys-77–Cys-88, Cys-128–Cys-136, Cys-138–Cys-155, Cys-203–Cys-217, Cys-205–Cys-212, Cys-281–Cys-312, Cys-297–Cys-307, Cys-311–Cys-351, Cys-327–Cys-342, Cys-329–Cys-339, and Cys-334–Cys-335. N-linked (GlcNAc...) asparagine glycosylation occurs at Asn-87. The O-palmitoleoyl serine; by PORCN moiety is linked to residue Ser-209. Asn-298 carries an N-linked (GlcNAc...) asparagine glycan.

This sequence belongs to the Wnt family. As to quaternary structure, forms a soluble 1:1 complex with AFM; this prevents oligomerization and is required for prolonged biological activity. The complex with AFM may represent the physiological form in body fluids. Homooligomer; disulfide-linked, leading to inactivation. Interacts with APCDD1 and WLS. Component of the Wnt-Fzd-LRP5-LRP6 signaling complex that contains a WNT protein, a FZD protein and LRP5 or LRP6. Interacts directly in the complex with LRP6. Interacts with PORCN. Interacts with glypican GPC3. Interacts with PKD1 (via extracellular domain). Interacts with FZD5. Post-translationally, proteolytic processing by TIKI1 and TIKI2 promotes oxidation and formation of large disulfide-bond oligomers, leading to inactivation of WNT3A. In terms of processing, disulfide bonds have critical and distinct roles in secretion and activity. Loss of each conserved cysteine in WNT3A results in high molecular weight oxidized Wnt oligomers, which are formed through inter-Wnt disulfide bonding. Palmitoleoylation by PORCN is required for efficient binding to frizzled receptors. Palmitoleoylation is required for proper trafficking to cell surface, vacuolar acidification is critical to release palmitoleoylated WNT3A from WLS in secretory vesicles. Depalmitoleoylated by NOTUM, leading to inhibit Wnt signaling pathway, possibly by promoting disulfide bond formation and oligomerization. In terms of tissue distribution, dorsal portion of the neural tube (developing roof plate), and mesenchyme tissue surrounding the umbilical veins.

It is found in the secreted. It localises to the extracellular space. Its subcellular location is the extracellular matrix. Its function is as follows. Ligand for members of the frizzled family of seven transmembrane receptors. Functions in the canonical Wnt signaling pathway that results in activation of transcription factors of the TCF/LEF family. Required for normal embryonic mesoderm development and formation of caudal somites. Required for normal morphogenesis of the developing neural tube. Mediates self-renewal of the stem cells at the bottom on intestinal crypts (in vitro). The protein is Protein Wnt-3a (Wnt3a) of Mus musculus (Mouse).